The chain runs to 450 residues: tRNA modification GTPase MnmE (450 aa).

(6S)-5-formyl-5,6,7,8-tetrahydrofolate contacts are provided by Arg-23, Glu-79, and Lys-118. The 161-residue stretch at 214-374 (GITLILVGKP…LKEHILNKVG (161 aa)) folds into the TrmE-type G domain. Asn-224 lines the K(+) pocket. GTP-binding positions include 224–229 (NAGKSS), 243–249 (TSIAGTT), and 268–271 (DTAG). Ser-228 provides a ligand contact to Mg(2+). K(+) contacts are provided by Thr-243, Ile-245, and Thr-248. Thr-249 provides a ligand contact to Mg(2+). Lys-450 provides a ligand contact to (6S)-5-formyl-5,6,7,8-tetrahydrofolate.

The protein belongs to the TRAFAC class TrmE-Era-EngA-EngB-Septin-like GTPase superfamily. TrmE GTPase family. In terms of assembly, homodimer. Heterotetramer of two MnmE and two MnmG subunits. K(+) serves as cofactor.

Its subcellular location is the cytoplasm. Functionally, exhibits a very high intrinsic GTPase hydrolysis rate. Involved in the addition of a carboxymethylaminomethyl (cmnm) group at the wobble position (U34) of certain tRNAs, forming tRNA-cmnm(5)s(2)U34. The chain is tRNA modification GTPase MnmE from Francisella tularensis subsp. tularensis (strain WY96-3418).